The primary structure comprises 185 residues: Ribosome-recycling factor (185 aa).

The protein belongs to the RRF family.

It localises to the cytoplasm. In terms of biological role, responsible for the release of ribosomes from messenger RNA at the termination of protein biosynthesis. May increase the efficiency of translation by recycling ribosomes from one round of translation to another. The sequence is that of Ribosome-recycling factor from Desulforapulum autotrophicum (strain ATCC 43914 / DSM 3382 / VKM B-1955 / HRM2) (Desulfobacterium autotrophicum).